A 110-amino-acid polypeptide reads, in one-letter code: U9-agatoxin-Ao1a (110 aa).

An N-terminal signal peptide occupies residues 1 to 17 (MKLLLAIAGLFLVQTLA). Residues 18–38 (EDVRAHEESSFLAAVAPEEQR) constitute a propeptide that is removed on maturation. Cystine bridges form between Cys40–Cys54, Cys47–Cys60, Cys51–Cys87, Cys53–Cys72, and Cys62–Cys70.

The protein belongs to the neurotoxin 37 family. As to expression, expressed by the venom gland.

It localises to the secreted. The protein is U9-agatoxin-Ao1a of Agelena orientalis (Funnel-web spider).